Reading from the N-terminus, the 381-residue chain is MASNFTSIPVLDYPSSLSPSTKPAFLAELRDALVKVGFFQVRDPPIPLKLQQDALRLSAQFFDLPTEKKLDIENVHSKRFLGYSRINSESTASGTDYLESILLGPNLPELGPEEPVYLHLQGPSQWPDEVSVPGFRDVLESYHSQIQDFSIEFARLIAEALEMPLDTLTKLLGQPLFSRLKPTRYLPPSMNPAAEDGSHGIGPHKDIAFMTYLLQGGTHNCLEVQNKLGHWVPVPPVPGALVVNIGRLLEVITGGVCVATTHRVILKRQGFVDGDGKSLGPRISLPFFQFVNPRLTVDDVLVDVPHHIKDLVPDQVATTEAETFFSGLFNNCIGDNIFVNHLTTYPRVGKRWYPDLMQLASEKQAESKRLDEQRRATEGHI.

Belongs to the iron/ascorbate-dependent oxidoreductase family. It depends on Fe(2+) as a cofactor.

The protein operates within mycotoxin biosynthesis. 2-oxoglutarate-dependent dioxygenase; part of the gene cluster that mediates the biosynthesis of gramillins A and B, bicyclic lipopeptides that induce cell death in maize leaves but not in wheat leaves. The nonribosomal peptide synthetase GRA1 incorporates respectively a glutamic adic (Glu), a leucine (Leu), a serine (Ser), a hydroxyglutamine (HOGln), a 2-amino decanoic acid, and 2 cysteins (CysB and CysA). The biosynthesis of 2-amino decanoic acid incorporated in gramillins could be initiated by a fatty acid synthase composed of the alpha and beta subunits FGSG_00036 and FGSG_11656. The cytochrome P450 monooxygenase FGSG_15680 could hydroxylate the fatty acid chain. Subsequent oxidation to the ketone by the oxidoreductase FGSG_00048 and transamination by aminotransferase FGSG_00049 could form 2-amino-decanoic acid. On the other hand, FGSG_15680 could also be responsible for the HO-modified glutamine at the gamma-position. Whether hydroxylation occurs on the fully assembled product or on the Gln residue prior to assembly into the gramillins requires further proof. The thioredoxin FGSG_00043 could also be required for the disulfide-bond formation between CysA and CysB. The specific involvement of the remaining proteins from the cluster is more difficult to discern, but could have broader regulatory (FGSG_00040 and FGSG_11657) or enzymatic functions (FGSG_00044 and FGSG_00045). The final C-domain of GRA1 does not possess the expected sequence of a termination CT domain, often implicated in macrocyclization and release of a cyclopeptidein fungal NRPs; and the thioesterase FGSG_00047 may act in concert with the terminal C-domain of GRA1 to catalyze the formation of the macrocyclic anhydride and release of the products. This chain is 2-oxoglutarate-dependent dioxygenase FGSG_00048, found in Gibberella zeae (strain ATCC MYA-4620 / CBS 123657 / FGSC 9075 / NRRL 31084 / PH-1) (Wheat head blight fungus).